We begin with the raw amino-acid sequence, 1036 residues long: Isoleucine--tRNA ligase (1036 aa).

Residues 46-56 (PFATGLPHYGH) carry the 'HIGH' region motif. The 'KMSKS' region signature appears at 589 to 593 (KMSKR). Residue lysine 592 participates in ATP binding.

It belongs to the class-I aminoacyl-tRNA synthetase family. IleS type 2 subfamily. As to quaternary structure, monomer. Requires Zn(2+) as cofactor.

It is found in the cytoplasm. It catalyses the reaction tRNA(Ile) + L-isoleucine + ATP = L-isoleucyl-tRNA(Ile) + AMP + diphosphate. In terms of biological role, catalyzes the attachment of isoleucine to tRNA(Ile). As IleRS can inadvertently accommodate and process structurally similar amino acids such as valine, to avoid such errors it has two additional distinct tRNA(Ile)-dependent editing activities. One activity is designated as 'pretransfer' editing and involves the hydrolysis of activated Val-AMP. The other activity is designated 'posttransfer' editing and involves deacylation of mischarged Val-tRNA(Ile). The protein is Isoleucine--tRNA ligase of Chlamydia trachomatis serovar L2b (strain UCH-1/proctitis).